Here is a 447-residue protein sequence, read N- to C-terminus: FAD-dependent monooxygenase tropB (447 aa).

Residues 12 to 32 (PLSVGIVGGGIIGVILAAGLV) traverse the membrane as a helical segment. E42, A55, and R124 together coordinate FAD. Residue N153 is glycosylated (N-linked (GlcNAc...) asparagine). Catalysis depends on residues R206 and Y239. A glycan (N-linked (GlcNAc...) asparagine) is linked at N243. Residues D322 and A335 each contribute to the FAD site.

The protein belongs to the paxM FAD-dependent monooxygenase family. FAD serves as cofactor.

It localises to the membrane. It participates in secondary metabolite biosynthesis. Its function is as follows. FAD-dependent monooxygenase; part of the gene cluster that mediates the biosynthesis of the tropolone class of fungal maleic anhydrides. Within the pathway, tropB catalyzes a synthetically challenging asymmetric oxidative dearomatization reaction to convert 3-methylorcinaldehyde into a hydroxycyclohexadione. The pathway begins with the synthesis of 3-methylorcinaldehyde by the non-reducing polyketide synthase (PKS) tropA. 3-methylorcinaldehyde is the substrate for the FAD-dependent monooxygenase tropB to yield a dearomatized hydroxycyclohexadione. The 2-oxoglutarate-dependent dioxygenase tropC then performs the oxidative ring expansion to provide the first tropolone metabolite stipitaldehyde. Trop D converts stipitaldehyde into stipitacetal which is in turn converted to stipitalide by the short-chain dehydrogenase/reductase tropE. The next steps involve tropF, tropG, tropH, tropI and tropJ to form successive tropolone maleic anhydrides including stipitaldehydic, stipitatonic and stipitatic acids. The protein is FAD-dependent monooxygenase tropB of Talaromyces stipitatus (strain ATCC 10500 / CBS 375.48 / QM 6759 / NRRL 1006) (Penicillium stipitatum).